Consider the following 406-residue polypeptide: Phosphopentomutase (406 aa).

Mn(2+) contacts are provided by D10, D305, H310, D346, H347, and H358.

Belongs to the phosphopentomutase family. The cofactor is Mn(2+).

The protein resides in the cytoplasm. The catalysed reaction is 2-deoxy-alpha-D-ribose 1-phosphate = 2-deoxy-D-ribose 5-phosphate. It carries out the reaction alpha-D-ribose 1-phosphate = D-ribose 5-phosphate. Its pathway is carbohydrate degradation; 2-deoxy-D-ribose 1-phosphate degradation; D-glyceraldehyde 3-phosphate and acetaldehyde from 2-deoxy-alpha-D-ribose 1-phosphate: step 1/2. Its function is as follows. Isomerase that catalyzes the conversion of deoxy-ribose 1-phosphate (dRib-1-P) and ribose 1-phosphate (Rib-1-P) to deoxy-ribose 5-phosphate (dRib-5-P) and ribose 5-phosphate (Rib-5-P), respectively. The polypeptide is Phosphopentomutase (Vibrio vulnificus (strain CMCP6)).